Here is a 1106-residue protein sequence, read N- to C-terminus: MPRRQDLNSVLVIGSGPIVIGQAAEFDYSGTQALRVLKDEGLRVILVNSNPATIMTDPEFADATYVEPITPETVEKIIAKERPDAVLPTLGGQTALNTALALDANGALEKYGVELIGADVDAINLGEDREAFKGVVERCGAESARSVIVHSMDEALAAAEQLGYPMVVRPSFTMGGLGSGLAYNETDLHRIAGAGIQYSPTSEVLLEESILGWKEYELEMMRDAKDNVVVVCSIENVDPVGVHTGDSVTVAPALTLTDREYQRMRDIAIAVIREVGVDTGGCNIQFAVEPDTGRVVVIEMNPRVSRSSALASKATGFPIAKIATKLSLGYTLDEIPNDITRKTPASFEPTLDYVVVKVPRFAFEKFPAADPTLTTTMKSVGEAMAIGRNFTEALQKAMRSLEQKGSAFSFARPAVEPGPNTVARLVSKTEETTTERLRNVQRALLAGATVEQVFGATSIDPWFLDQIQLLNETADLIREDPDLHPETLREAKRHGFSDAQIGELVHLDESVVRGIRHALDIRPVYKTVDTCAAEFEAFTPYHYSSYDRETEVAPHEKPSVMILGSGPNRIGQGIEFDYSCVHASMVLREAGYETVMVNCNPETVSTDYDISTRLYFEPLTFEDVMEVVEAERRTGGLLGVFVQLGGQTPLKLAADLKAAGVPILGTSPEAIDLAEDRGEFARVLTEAGLRQPKNGTAHDFEEASRIAHEIGYPVLVRPSYVLGGRGMEIVYDEASLKTYLDNATEVSPSRPALIDKFLEDAIEIDVDALFDGRDCYVGGIMEHIEEAGIHSGDSACVLPPITLAPDVVTRVREATEAIARGVGVKGLINLQFALASDVLYVIEANPRASRTVPFVSKATGVQMAKAAALIGTGRTVAQLRAEGVLPADHDGTTLPEGTPTAVKEVVLPFARFRTPEGTVVDSLLGPEMRSTGEVMGVDKYFDTAFAKAQAAAGGPLPTSGSLFVSVANKDKRSAVIPVKMFADLGFEIVSTGGTAEVLRRNGIESTVVAKIADAEGEEPTVADLITDGRIDLIFNTPSGGQAARGDGYQIRAAATSVGVPTMTTVSELGAALQAITAQRQYSWDVTSLQEHEQTLRERAAQEASRD.

The tract at residues 1-402 is carboxyphosphate synthetic domain; sequence MPRRQDLNSV…ALQKAMRSLE (402 aa). 12 residues coordinate ATP: R129, R169, G175, G176, E208, I210, E215, G241, V242, H243, Q285, and E299. The ATP-grasp 1 domain occupies 133-328; the sequence is KGVVERCGAE…IAKIATKLSL (196 aa). The Mg(2+) site is built by Q285, E299, and N301. Residues Q285, E299, and N301 each contribute to the Mn(2+) site. The interval 403-550 is oligomerization domain; the sequence is QKGSAFSFAR…YHYSSYDRET (148 aa). Residues 551–953 form a carbamoyl phosphate synthetic domain region; it reads EVAPHEKPSV…AFAKAQAAAG (403 aa). In terms of domain architecture, ATP-grasp 2 spans 681–872; that stretch reads ARVLTEAGLR…MAKAAALIGT (192 aa). R717, K756, L758, E763, G788, I789, H790, S791, Q831, and E843 together coordinate ATP. Residues Q831, E843, and N845 each contribute to the Mg(2+) site. Positions 831, 843, and 845 each coordinate Mn(2+). Residues 954–1106 form the MGS-like domain; it reads GPLPTSGSLF…ERAAQEASRD (153 aa). The interval 954–1106 is allosteric domain; that stretch reads GPLPTSGSLF…ERAAQEASRD (153 aa).

The protein belongs to the CarB family. Composed of two chains; the small (or glutamine) chain promotes the hydrolysis of glutamine to ammonia, which is used by the large (or ammonia) chain to synthesize carbamoyl phosphate. Tetramer of heterodimers (alpha,beta)4. The cofactor is Mg(2+). Requires Mn(2+) as cofactor.

It catalyses the reaction hydrogencarbonate + L-glutamine + 2 ATP + H2O = carbamoyl phosphate + L-glutamate + 2 ADP + phosphate + 2 H(+). The catalysed reaction is hydrogencarbonate + NH4(+) + 2 ATP = carbamoyl phosphate + 2 ADP + phosphate + 2 H(+). It participates in amino-acid biosynthesis; L-arginine biosynthesis; carbamoyl phosphate from bicarbonate: step 1/1. It functions in the pathway pyrimidine metabolism; UMP biosynthesis via de novo pathway; (S)-dihydroorotate from bicarbonate: step 1/3. Its function is as follows. Large subunit of the glutamine-dependent carbamoyl phosphate synthetase (CPSase). CPSase catalyzes the formation of carbamoyl phosphate from the ammonia moiety of glutamine, carbonate, and phosphate donated by ATP, constituting the first step of 2 biosynthetic pathways, one leading to arginine and/or urea and the other to pyrimidine nucleotides. The large subunit (synthetase) binds the substrates ammonia (free or transferred from glutamine from the small subunit), hydrogencarbonate and ATP and carries out an ATP-coupled ligase reaction, activating hydrogencarbonate by forming carboxy phosphate which reacts with ammonia to form carbamoyl phosphate. The chain is Carbamoyl phosphate synthase large chain from Kocuria rhizophila (strain ATCC 9341 / DSM 348 / NBRC 103217 / DC2201).